The sequence spans 231 residues: Octanoyltransferase (231 aa).

Residues 49–224 form the BPL/LPL catalytic domain; it reads ADTPDEIWLL…ALQRLLPPVY (176 aa). Substrate contacts are provided by residues 88-95, 155-157, and 168-170; these read RGGQITYH, ALG, and GLA. The active-site Acyl-thioester intermediate is Cys186.

The protein belongs to the LipB family.

It localises to the cytoplasm. It catalyses the reaction octanoyl-[ACP] + L-lysyl-[protein] = N(6)-octanoyl-L-lysyl-[protein] + holo-[ACP] + H(+). It participates in protein modification; protein lipoylation via endogenous pathway; protein N(6)-(lipoyl)lysine from octanoyl-[acyl-carrier-protein]: step 1/2. Its function is as follows. Catalyzes the transfer of endogenously produced octanoic acid from octanoyl-acyl-carrier-protein onto the lipoyl domains of lipoate-dependent enzymes. Lipoyl-ACP can also act as a substrate although octanoyl-ACP is likely to be the physiological substrate. In Aromatoleum aromaticum (strain DSM 19018 / LMG 30748 / EbN1) (Azoarcus sp. (strain EbN1)), this protein is Octanoyltransferase.